Reading from the N-terminus, the 202-residue chain is UPF0056 membrane protein CPn_1010/CP_0843/CPj1010/CpB1048 (202 aa).

The next 6 membrane-spanning stretches (helical) occupy residues 7–27, 39–59, 61–81, 105–125, 137–157, and 175–195; these read LSLL…FVAL, VILR…TFGR, FFQF…FLLF, PIFF…TALL, IIFT…LCSS, and FGIA…SIAF.

It belongs to the UPF0056 (MarC) family.

It localises to the cell membrane. The chain is UPF0056 membrane protein CPn_1010/CP_0843/CPj1010/CpB1048 from Chlamydia pneumoniae (Chlamydophila pneumoniae).